The primary structure comprises 335 residues: Erlin-2 (335 aa).

The Cytoplasmic portion of the chain corresponds to 1 to 2 (MS). The helical transmembrane segment at 3–23 (HAGAIAAIGVALIAAALFSAI) threads the bilayer. Residues 24 to 335 (HKIEEGHVGV…ALNEPAVGDE (312 aa)) are Lumenal-facing. Asparagine 106 carries an N-linked (GlcNAc...) asparagine glycan. The segment covering 310–321 (AGPSVQSATLLQ) has biased composition (polar residues). The interval 310 to 335 (AGPSVQSATLLQDDSPALNEPAVGDE) is disordered.

This sequence belongs to the band 7/mec-2 family.

The protein localises to the endoplasmic reticulum membrane. Mediates the endoplasmic reticulum-associated degradation (ERAD) of inositol 1,4,5-trisphosphate receptors (IP3Rs). Promotes sterol-accelerated ERAD of HMGCR. Involved in regulation of cellular cholesterol homeostasis by regulation the SREBP signaling pathway. In Xenopus tropicalis (Western clawed frog), this protein is Erlin-2 (erlin2).